A 254-amino-acid chain; its full sequence is 5-oxoprolinase subunit A (254 aa).

It belongs to the LamB/PxpA family. Forms a complex composed of PxpA, PxpB and PxpC.

The catalysed reaction is 5-oxo-L-proline + ATP + 2 H2O = L-glutamate + ADP + phosphate + H(+). Catalyzes the cleavage of 5-oxoproline to form L-glutamate coupled to the hydrolysis of ATP to ADP and inorganic phosphate. This is 5-oxoprolinase subunit A from Burkholderia thailandensis (strain ATCC 700388 / DSM 13276 / CCUG 48851 / CIP 106301 / E264).